The following is a 494-amino-acid chain: UDP-N-acetylmuramate--L-alanine ligase (494 aa).

134 to 140 (GSHGKTT) contributes to the ATP binding site.

The protein belongs to the MurCDEF family.

The protein localises to the cytoplasm. It catalyses the reaction UDP-N-acetyl-alpha-D-muramate + L-alanine + ATP = UDP-N-acetyl-alpha-D-muramoyl-L-alanine + ADP + phosphate + H(+). It functions in the pathway cell wall biogenesis; peptidoglycan biosynthesis. Cell wall formation. The protein is UDP-N-acetylmuramate--L-alanine ligase of Prochlorococcus marinus (strain NATL1A).